A 260-amino-acid chain; its full sequence is MALRRPMVAGNWKMNGSAQLAQELFNKFATKLQDDSVEVVLCPPSIYLESVRQLLDENKETLNGCLVRMGTQNLSQHDFGAYTGEISGQMLKDSGCRYVIIGHSERRRMYGETSNIVAEKFAAAQKHGLTPILCVGESGPAREARRTFEVIAEELDVVIEKNGTMAFDNAIIAYEPLWAVGTGKSATPEQAQEVHAFIRKRLSEVSPFIGENIRILYGGSVTPSNAADLFAQPDVDGGLIGGVSLNATEFLSLCTIAMSA.

Residue 11-13 (NWK) coordinates substrate. Residue histidine 103 is the Electrophile of the active site. Glutamate 175 serves as the catalytic Proton acceptor. Substrate is bound by residues glycine 181, serine 220, and 241–242 (GG).

This sequence belongs to the triosephosphate isomerase family. As to quaternary structure, homodimer.

It localises to the cytoplasm. The enzyme catalyses D-glyceraldehyde 3-phosphate = dihydroxyacetone phosphate. It participates in carbohydrate biosynthesis; gluconeogenesis. Its pathway is carbohydrate degradation; glycolysis; D-glyceraldehyde 3-phosphate from glycerone phosphate: step 1/1. In terms of biological role, involved in the gluconeogenesis. Catalyzes stereospecifically the conversion of dihydroxyacetone phosphate (DHAP) to D-glyceraldehyde-3-phosphate (G3P). The sequence is that of Triosephosphate isomerase from Shewanella pealeana (strain ATCC 700345 / ANG-SQ1).